A 176-amino-acid polypeptide reads, in one-letter code: Large ribosomal subunit protein uL6 (176 aa).

It belongs to the universal ribosomal protein uL6 family. As to quaternary structure, part of the 50S ribosomal subunit.

Functionally, this protein binds to the 23S rRNA, and is important in its secondary structure. It is located near the subunit interface in the base of the L7/L12 stalk, and near the tRNA binding site of the peptidyltransferase center. The protein is Large ribosomal subunit protein uL6 of Methanothrix thermoacetophila (strain DSM 6194 / JCM 14653 / NBRC 101360 / PT) (Methanosaeta thermophila).